The following is a 24-amino-acid chain: Neurotoxin 5 (24 aa).

Residues 2–24 form the LCN-type CS-alpha/beta domain; sequence RDAYIAQNYNCVYTCFKNDYCND.

It belongs to the long (4 C-C) scorpion toxin superfamily. Sodium channel inhibitor family. Alpha subfamily. Expressed by the venom gland.

It localises to the secreted. Binds to sodium channels (Nav) and inhibits the inactivation of the activated channels, thereby blocking neuronal transmission. This is Neurotoxin 5 from Buthus occitanus tunetanus (Common European scorpion).